The following is a 358-amino-acid chain: Uptake hydrogenase small subunit (358 aa).

The tat-type signal signal peptide spans 1 to 45 (MSRLETFYDVMRRQGITRRSFLKYCSLTAAALGLGPAFAPRIAHA). The [4Fe-4S] cluster site is built by Cys62, Cys65, Cys160, Cys194, His232, Cys235, Cys260, and Cys266. Cys275, Cys294, and Cys297 together coordinate [3Fe-4S] cluster.

This sequence belongs to the [NiFe]/[NiFeSe] hydrogenase small subunit family. As to quaternary structure, heterodimer of a large and a small subunit. [4Fe-4S] cluster serves as cofactor. It depends on [3Fe-4S] cluster as a cofactor. In terms of processing, predicted to be exported by the Tat system. The position of the signal peptide cleavage has been experimentally proven.

It is found in the cell membrane. The enzyme catalyses H2 + A = AH2. This enzyme recycles the H(2) produced by nitrogenase to increase the production of ATP and to protect nitrogenase against inhibition or damage by O(2) under carbon- or phosphate-limited conditions. This chain is Uptake hydrogenase small subunit (hoxK), found in Azotobacter vinelandii.